Here is a 115-residue protein sequence, read N- to C-terminus: MEILMIFVCGILTAMSVYLILSKSLIRIIIGTTLQTHTANLFLITMGGLKKGEVPIYEKGITSYVDPIPQALILTAIVISFSVTAFFLVLAFRSYKELGTDNVESMKGVLEDDRE.

Transmembrane regions (helical) follow at residues 1 to 21, 28 to 48, and 72 to 92; these read MEILMIFVCGILTAMSVYLIL, IIIGTTLQTHTANLFLITMGG, and LILTAIVISFSVTAFFLVLAF.

It belongs to the CPA3 antiporters (TC 2.A.63) subunit C family. As to quaternary structure, may form a heterooligomeric complex that consists of seven subunits: mnhA1, mnhB1, mnhC1, mnhD1, mnhE1, mnhF1 and mnhG1.

Its subcellular location is the cell membrane. In terms of biological role, mnh complex is a Na(+)/H(+) antiporter involved in Na(+) excretion. The polypeptide is Na(+)/H(+) antiporter subunit C1 (mnhC1) (Staphylococcus saprophyticus subsp. saprophyticus (strain ATCC 15305 / DSM 20229 / NCIMB 8711 / NCTC 7292 / S-41)).